A 387-amino-acid chain; its full sequence is F-box protein DOR (387 aa).

Residues 19 to 64 (DENFEPIPIDLVIEIFSRSPVKSIARCRCVSKLWASILRLPYFTEL) form the F-box domain.

Part of a SCF (ASK-cullin-F-box) protein ligase complex. Interacts with ASK14 and CUL1. Strongly expressed in guard cells. Mostly represented in seedlings, leaves and flowers, and, to a lower extent, in roots and siliques.

It functions in the pathway protein modification; protein ubiquitination. Functionally, component of SCF(ASK-cullin-F-box) E3 ubiquitin ligase complexes, which may mediate the ubiquitination and subsequent proteasomal degradation of target proteins. Negative regulator of guard cell abscisic acid (ABA) signaling, especially during drought stress. The chain is F-box protein DOR (DOR) from Arabidopsis thaliana (Mouse-ear cress).